Consider the following 230-residue polypeptide: NAD(P)H-hydrate epimerase (230 aa).

The region spanning 11-218 is the YjeF N-terminal domain; that stretch reads AIAVDQELFN…ALQRKYELNL (208 aa). 61–65 serves as a coordination point for (6S)-NADPHX; the sequence is NNGGD. K(+)-binding residues include Asn-62 and Asp-126. (6S)-NADPHX is bound by residues 130 to 136 and Asp-159; that span reads GFSFKPP. Ser-162 serves as a coordination point for K(+).

The protein belongs to the NnrE/AIBP family. It depends on K(+) as a cofactor.

The catalysed reaction is (6R)-NADHX = (6S)-NADHX. It carries out the reaction (6R)-NADPHX = (6S)-NADPHX. Its function is as follows. Catalyzes the epimerization of the S- and R-forms of NAD(P)HX, a damaged form of NAD(P)H that is a result of enzymatic or heat-dependent hydration. This is a prerequisite for the S-specific NAD(P)H-hydrate dehydratase to allow the repair of both epimers of NAD(P)HX. This chain is NAD(P)H-hydrate epimerase, found in Drosophila sechellia (Fruit fly).